The chain runs to 489 residues: Siroheme synthase (489 aa).

Residues 1–203 form a precorrin-2 dehydrogenase /sirohydrochlorin ferrochelatase region; the sequence is MDFFPVFMRL…GREDAARETL (203 aa). NAD(+)-binding positions include 22–23 and 43–44; these read PV and PA. The uroporphyrinogen-III C-methyltransferase stretch occupies residues 218-489; it reads GEVFLVGAGP…ARSSTEGAEA (272 aa). Residue P227 coordinates S-adenosyl-L-methionine. The active-site Proton acceptor is the D250. Catalysis depends on K272, which acts as the Proton donor. S-adenosyl-L-methionine contacts are provided by residues 303 to 305, I308, 333 to 334, M385, and G414; these read GGD and TA.

The protein in the N-terminal section; belongs to the precorrin-2 dehydrogenase / sirohydrochlorin ferrochelatase family. It in the C-terminal section; belongs to the precorrin methyltransferase family.

The enzyme catalyses uroporphyrinogen III + 2 S-adenosyl-L-methionine = precorrin-2 + 2 S-adenosyl-L-homocysteine + H(+). It catalyses the reaction precorrin-2 + NAD(+) = sirohydrochlorin + NADH + 2 H(+). The catalysed reaction is siroheme + 2 H(+) = sirohydrochlorin + Fe(2+). It functions in the pathway cofactor biosynthesis; adenosylcobalamin biosynthesis; precorrin-2 from uroporphyrinogen III: step 1/1. Its pathway is cofactor biosynthesis; adenosylcobalamin biosynthesis; sirohydrochlorin from precorrin-2: step 1/1. It participates in porphyrin-containing compound metabolism; siroheme biosynthesis; precorrin-2 from uroporphyrinogen III: step 1/1. The protein operates within porphyrin-containing compound metabolism; siroheme biosynthesis; siroheme from sirohydrochlorin: step 1/1. It functions in the pathway porphyrin-containing compound metabolism; siroheme biosynthesis; sirohydrochlorin from precorrin-2: step 1/1. Its function is as follows. Multifunctional enzyme that catalyzes the SAM-dependent methylations of uroporphyrinogen III at position C-2 and C-7 to form precorrin-2 via precorrin-1. Then it catalyzes the NAD-dependent ring dehydrogenation of precorrin-2 to yield sirohydrochlorin. Finally, it catalyzes the ferrochelation of sirohydrochlorin to yield siroheme. The sequence is that of Siroheme synthase from Thioalkalivibrio sulfidiphilus (strain HL-EbGR7).